Consider the following 612-residue polypeptide: uncharacterized protein (612 aa).

Positions 213–238 (ASAEDGEEAAAGAGKRQVARSGARKR) are disordered. Residues 421–610 (DLACLLLADL…ERLLQLYRRL (190 aa)) form the VWFA domain.

It is found in the cytoplasm. Its function is as follows. Component of the anaerobic respiratory chain that transforms nitrate to dinitrogen (denitrification). Function unknown, but essential for the denitrification process. This is an uncharacterized protein from Pseudomonas aeruginosa (strain ATCC 15692 / DSM 22644 / CIP 104116 / JCM 14847 / LMG 12228 / 1C / PRS 101 / PAO1).